We begin with the raw amino-acid sequence, 282 residues long: Bifunctional protein FolD (282 aa).

NADP(+)-binding positions include 165–167, Ser190, and Ile231; that span reads NRS.

The protein belongs to the tetrahydrofolate dehydrogenase/cyclohydrolase family. Homodimer.

The enzyme catalyses (6R)-5,10-methylene-5,6,7,8-tetrahydrofolate + NADP(+) = (6R)-5,10-methenyltetrahydrofolate + NADPH. It carries out the reaction (6R)-5,10-methenyltetrahydrofolate + H2O = (6R)-10-formyltetrahydrofolate + H(+). It participates in one-carbon metabolism; tetrahydrofolate interconversion. Functionally, catalyzes the oxidation of 5,10-methylenetetrahydrofolate to 5,10-methenyltetrahydrofolate and then the hydrolysis of 5,10-methenyltetrahydrofolate to 10-formyltetrahydrofolate. The sequence is that of Bifunctional protein FolD from Clostridium botulinum (strain Langeland / NCTC 10281 / Type F).